Reading from the N-terminus, the 158-residue chain is Cytochrome c-type biogenesis protein CcmE (158 aa).

The Cytoplasmic portion of the chain corresponds to 1-23 (MNSQSFKNFPSLKFISKKRRKER). A helical; Signal-anchor for type II membrane protein membrane pass occupies residues 24-44 (LLMVLLCLFIMAITTGLIVYA). Residues 45–158 (MRNTANFFRT…DRLKKHHDIK (114 aa)) lie on the Periplasmic side of the membrane. Heme-binding residues include histidine 138 and tyrosine 142.

The protein belongs to the CcmE/CycJ family.

It is found in the cell inner membrane. In terms of biological role, heme chaperone required for the biogenesis of c-type cytochromes. Transiently binds heme delivered by CcmC and transfers the heme to apo-cytochromes in a process facilitated by CcmF and CcmH. The sequence is that of Cytochrome c-type biogenesis protein CcmE from Bartonella bacilliformis (strain ATCC 35685 / KC583 / Herrer 020/F12,63).